Here is a 293-residue protein sequence, read N- to C-terminus: Haloalkane dehalogenase (293 aa).

In terms of domain architecture, AB hydrolase-1 spans 34-158 (PVLFLHGNPT…FQAFRTADVG (125 aa)). Asp106 (nucleophile) is an active-site residue. Glu130 serves as the catalytic Proton donor. His272 serves as the catalytic Proton acceptor.

The protein belongs to the haloalkane dehalogenase family. Type 2 subfamily. In terms of assembly, monomer.

It carries out the reaction 1-haloalkane + H2O = a halide anion + a primary alcohol + H(+). The protein operates within xenobiotic degradation; haloalkane degradation. It functions in the pathway xenobiotic degradation; 1,3-dichloropropene degradation. In terms of biological role, catalyzes hydrolytic cleavage of carbon-halogen bonds in halogenated aliphatic compounds, leading to the formation of the corresponding primary alcohols, halide ions and protons. Has a broad substrate specificity, as it is able to dehalogenate mono- and di- chlorinated and brominated alkanes (up to at least C10), and the two isomers of 1,3-dichloropropene to 3-chloroallyl alcohol; the highest activity was found with 1,2-dibromoethane, while no activity was observed with the analog 1,2-dichloroethane. This is Haloalkane dehalogenase (dhaA) from Pseudomonas pavonaceae.